The following is a 197-amino-acid chain: ATP-dependent Clp protease proteolytic subunit (197 aa).

Ser102 (nucleophile) is an active-site residue. His127 is a catalytic residue.

It belongs to the peptidase S14 family. In terms of assembly, fourteen ClpP subunits assemble into 2 heptameric rings which stack back to back to give a disk-like structure with a central cavity, resembling the structure of eukaryotic proteasomes.

The protein localises to the cytoplasm. It catalyses the reaction Hydrolysis of proteins to small peptides in the presence of ATP and magnesium. alpha-casein is the usual test substrate. In the absence of ATP, only oligopeptides shorter than five residues are hydrolyzed (such as succinyl-Leu-Tyr-|-NHMec, and Leu-Tyr-Leu-|-Tyr-Trp, in which cleavage of the -Tyr-|-Leu- and -Tyr-|-Trp bonds also occurs).. In terms of biological role, cleaves peptides in various proteins in a process that requires ATP hydrolysis. Has a chymotrypsin-like activity. Plays a major role in the degradation of misfolded proteins. This chain is ATP-dependent Clp protease proteolytic subunit, found in Borreliella afzelii (strain PKo) (Borrelia afzelii).